Reading from the N-terminus, the 149-residue chain is Putative inactive group IIC secretory phospholipase A2 (149 aa).

An N-terminal signal peptide occupies residues 1–18 (MKVIAILTLLLFCSPTHS). 4 disulfides stabilise this stretch: Cys44–Cys142, Cys77–Cys107, Cys95–Cys112, and Cys97–Cys105. Residues Tyr45, Gly47, and Gly49 each coordinate Ca(2+).

It belongs to the phospholipase A2 family. Requires Ca(2+) as cofactor.

It localises to the secreted. Its function is as follows. Inactive phospholipase. This chain is Putative inactive group IIC secretory phospholipase A2 (PLA2G2C), found in Homo sapiens (Human).